An 887-amino-acid chain; its full sequence is Pre-mRNA-splicing factor cwf22 (887 aa).

The tract at residues M1 to R27 is disordered. Residues K124–K307 enclose the MIF4G domain. The tract at residues I366–V401 is disordered. The segment covering G368 to V394 has biased composition (acidic residues). Residues N411–L527 form the MI domain. 2 disordered regions span residues M607–H834 and G867–D887. Positions E618–S662 are enriched in low complexity. A Phosphoserine modification is found at S662. T664 carries the phosphothreonine modification. Residues K677–S690 show a composition bias toward basic and acidic residues. The segment covering N691–Y712 has biased composition (low complexity). Positions R717–Y726 are enriched in basic and acidic residues. Over residues R736 to R746 the composition is skewed to basic residues. Composition is skewed to low complexity over residues S747–P762 and S769–P791. Over residues D799–P809 the composition is skewed to polar residues.

It belongs to the CWC22 family. In terms of assembly, belongs to the 40S cdc5-associated complex (or cwf complex), a spliceosome sub-complex reminiscent of a late-stage spliceosome composed of the U2, U5 and U6 snRNAs and at least brr2, cdc5, cwf2/prp3, cwf3/syf1, cwf4/syf3, cwf5/ecm2, spp42/cwf6, cwf7/spf27, cwf8, cwf9, cwf10, cwf11, cwf12, prp45/cwf13, cwf14, cwf15, cwf16, cwf17, cwf18, cwf19, cwf20, cwf21, cwf22, cwf23, cwf24, cwf25, cwf26, cyp7/cwf27, cwf28, cwf29/ist3, lea1, msl1, prp5/cwf1, prp10, prp12/sap130, prp17, prp22, sap61, sap62, sap114, sap145, slu7, smb1, smd1, smd3, smf1, smg1 and syf2.

It is found in the cytoplasm. Its subcellular location is the nucleus. Its function is as follows. May be involved in pre-mRNA splicing. This Schizosaccharomyces pombe (strain 972 / ATCC 24843) (Fission yeast) protein is Pre-mRNA-splicing factor cwf22 (cwf22).